Reading from the N-terminus, the 87-residue chain is Small ribosomal subunit protein bS20 (87 aa).

Residues 1–23 (MANHKSAIKRHKQSVKRAARNRA) are disordered.

It belongs to the bacterial ribosomal protein bS20 family.

Binds directly to 16S ribosomal RNA. In Oleidesulfovibrio alaskensis (strain ATCC BAA-1058 / DSM 17464 / G20) (Desulfovibrio alaskensis), this protein is Small ribosomal subunit protein bS20.